Here is a 92-residue protein sequence, read N- to C-terminus: YcgL domain-containing protein ASA_2166 (92 aa).

The region spanning 1 to 85 (MLCAVYKSRK…PPENLLEQHK (85 aa)) is the YcgL domain.

In Aeromonas salmonicida (strain A449), this protein is YcgL domain-containing protein ASA_2166.